We begin with the raw amino-acid sequence, 255 residues long: BPI fold-containing family A member 1 (255 aa).

An N-terminal signal peptide occupies residues 1-19; it reads MFHIGSLVVLCGLLAPTTA. The tract at residues 87–92 is important for surfactant activity and antibacterial properties; sequence LLGSLL. Asparagine 157, asparagine 178, and asparagine 205 each carry an N-linked (GlcNAc...) asparagine glycan. Cysteine 179 and cysteine 223 are disulfide-bonded.

This sequence belongs to the BPI/LBP/Plunc superfamily. Plunc family. In terms of assembly, monomer. Interacts (via N-terminus) with SCNN1B, a subunit of the heterotrimeric epithelial sodium channel (ENaC); this inhibits proteolytic activation of ENaC. In terms of tissue distribution, expressed in trachea, and at lower levels in nasal epithelium.

The protein resides in the secreted. Lipid-binding protein which shows high specificity for the surfactant phospholipid dipalmitoylphosphatidylcholine (DPPC). Plays a role in the innate immune responses of the upper airways. Reduces the surface tension in secretions from airway epithelia and inhibits the formation of biofilm by pathogenic Gram-negative bacteria, such as P.aeruginosa and K.pneumoniae. Negatively regulates proteolytic cleavage of SCNN1G, an event that is required for activation of the epithelial sodium channel (ENaC), and thereby contributes to airway surface liquid homeostasis and proper clearance of mucus. Plays a role in the airway inflammatory response after exposure to irritants. May attract macrophages and neutrophils. This chain is BPI fold-containing family A member 1 (BPIFA1), found in Bos taurus (Bovine).